Here is a 110-residue protein sequence, read N- to C-terminus: MHVKTGDEVLVIAGKDKGRRGKIKRALPAVNRVVVEGLNIVKRHQKPRGPGRPGGIVEMEAPIHVSNVMLICPSCGRASRTGKRFLEETDHKGRPRKVRYCKACDAIIDK.

The protein belongs to the universal ribosomal protein uL24 family. In terms of assembly, part of the 50S ribosomal subunit.

In terms of biological role, one of two assembly initiator proteins, it binds directly to the 5'-end of the 23S rRNA, where it nucleates assembly of the 50S subunit. Functionally, one of the proteins that surrounds the polypeptide exit tunnel on the outside of the subunit. This is Large ribosomal subunit protein uL24 from Chloroflexus aggregans (strain MD-66 / DSM 9485).